Reading from the N-terminus, the 321-residue chain is ATP-dependent 6-phosphofructokinase (321 aa).

Residue Gly-12 coordinates ATP. Residues Arg-22 to Arg-26 and Arg-55 to Asp-60 each bind ADP. Residues Arg-73–Phe-74 and Gly-103–Ser-106 contribute to the ATP site. Position 104 (Asp-104) interacts with Mg(2+). Thr-127–Asp-129 serves as a coordination point for substrate. Asp-129 serves as the catalytic Proton acceptor. ADP is bound at residue Arg-156. Substrate contacts are provided by residues Arg-164 and Met-171–Arg-173. ADP contacts are provided by residues Gly-187–Glu-189, Lys-213, and Lys-215–His-217. Substrate is bound by residues Glu-224, Arg-245, and His-251–Arg-254.

This sequence belongs to the phosphofructokinase type A (PFKA) family. ATP-dependent PFK group I subfamily. Prokaryotic clade 'B1' sub-subfamily. As to quaternary structure, homotetramer. Mg(2+) serves as cofactor.

Its subcellular location is the cytoplasm. It carries out the reaction beta-D-fructose 6-phosphate + ATP = beta-D-fructose 1,6-bisphosphate + ADP + H(+). The protein operates within carbohydrate degradation; glycolysis; D-glyceraldehyde 3-phosphate and glycerone phosphate from D-glucose: step 3/4. With respect to regulation, allosterically activated by ADP and other diphosphonucleosides, and allosterically inhibited by phosphoenolpyruvate. Catalyzes the phosphorylation of D-fructose 6-phosphate to fructose 1,6-bisphosphate by ATP, the first committing step of glycolysis. This chain is ATP-dependent 6-phosphofructokinase, found in Histophilus somni (strain 129Pt) (Haemophilus somnus).